The sequence spans 146 residues: Large ribosomal subunit protein uL15 (146 aa).

The span at 1–13 (MKLHELKAAEGSR) shows a compositional bias: basic and acidic residues. Positions 1–56 (MKLHELKAAEGSRRVRNRVGRGAGSGNGKTSGRGQKGQKARSGGGVRPGFEGGQLP) are disordered. 2 stretches are compositionally biased toward gly residues: residues 21 to 35 (RGAG…GRGQ) and 42 to 52 (SGGGVRPGFEG).

It belongs to the universal ribosomal protein uL15 family. Part of the 50S ribosomal subunit.

Its function is as follows. Binds to the 23S rRNA. In Staphylococcus haemolyticus (strain JCSC1435), this protein is Large ribosomal subunit protein uL15.